The following is a 502-amino-acid chain: Membrane-bound lytic murein transglycosylase F (502 aa).

A signal peptide spans 1-33 (MSRFISTFRSSSAQLSIVLAVILATGCSQPTTL). Residues 34–264 (QEIREEGVLH…QLAERFYGHL (231 aa)) are non-LT domain. The interval 265–502 (DRLNYVGART…PELRLIPPTL (238 aa)) is LT domain. Glu311 is a catalytic residue. Positions 457–502 (PSASGLEDQLAWLGDNEAGPEAPAKESQPDLRADLPPELRLIPPTL) are disordered. Over residues 479 to 493 (PAKESQPDLRADLPP) the composition is skewed to basic and acidic residues.

This sequence in the N-terminal section; belongs to the bacterial solute-binding protein 3 family. In the C-terminal section; belongs to the transglycosylase Slt family.

It localises to the cell outer membrane. It catalyses the reaction Exolytic cleavage of the (1-&gt;4)-beta-glycosidic linkage between N-acetylmuramic acid (MurNAc) and N-acetylglucosamine (GlcNAc) residues in peptidoglycan, from either the reducing or the non-reducing ends of the peptidoglycan chains, with concomitant formation of a 1,6-anhydrobond in the MurNAc residue.. Murein-degrading enzyme that degrades murein glycan strands and insoluble, high-molecular weight murein sacculi, with the concomitant formation of a 1,6-anhydromuramoyl product. Lytic transglycosylases (LTs) play an integral role in the metabolism of the peptidoglycan (PG) sacculus. Their lytic action creates space within the PG sacculus to allow for its expansion as well as for the insertion of various structures such as secretion systems and flagella. This is Membrane-bound lytic murein transglycosylase F from Marinobacter nauticus (strain ATCC 700491 / DSM 11845 / VT8) (Marinobacter aquaeolei).